Here is a 232-residue protein sequence, read N- to C-terminus: Ribonuclease 3 (232 aa).

An RNase III domain is found at 5–134 (QTVLKNHFAI…FLGALLLDKD (130 aa)). A Mg(2+)-binding site is contributed by Glu47. Asp51 is an active-site residue. Mg(2+) is bound by residues Asp120 and Glu123. Residue Glu123 is part of the active site. The 70-residue stretch at 160 to 229 (DYKTHLQELL…AKNAVEKGLD (70 aa)) folds into the DRBM domain.

The protein belongs to the ribonuclease III family. Homodimer. Mg(2+) serves as cofactor.

The protein localises to the cytoplasm. It carries out the reaction Endonucleolytic cleavage to 5'-phosphomonoester.. Its function is as follows. Digests double-stranded RNA. Involved in the processing of primary rRNA transcript to yield the immediate precursors to the large and small rRNAs (23S and 16S). Processes some mRNAs, and tRNAs when they are encoded in the rRNA operon. Processes pre-crRNA and tracrRNA of type II CRISPR loci if present in the organism. The protein is Ribonuclease 3 of Streptococcus pneumoniae serotype 4 (strain ATCC BAA-334 / TIGR4).